Reading from the N-terminus, the 173-residue chain is Translation initiation factor IF-3 (173 aa).

The protein belongs to the IF-3 family. Monomer.

It is found in the cytoplasm. IF-3 binds to the 30S ribosomal subunit and shifts the equilibrium between 70S ribosomes and their 50S and 30S subunits in favor of the free subunits, thus enhancing the availability of 30S subunits on which protein synthesis initiation begins. This chain is Translation initiation factor IF-3, found in Lactiplantibacillus plantarum (strain ATCC BAA-793 / NCIMB 8826 / WCFS1) (Lactobacillus plantarum).